Here is a 143-residue protein sequence, read N- to C-terminus: MFKTYTAAPASVEREWYVIDADGKTLGRLATEVARRLRGKHKPEFTPNIDTGDYVIVINADKIGVTGRKEQDKIYYHHTGYVGSMKSANFSQMQQRNPGRVLEIAVKGMLPKGPLGRAQLKKLKIYAGSEHEHSAQQPTALEI.

The protein belongs to the universal ribosomal protein uL13 family. As to quaternary structure, part of the 50S ribosomal subunit.

This protein is one of the early assembly proteins of the 50S ribosomal subunit, although it is not seen to bind rRNA by itself. It is important during the early stages of 50S assembly. In Dichelobacter nodosus (strain VCS1703A), this protein is Large ribosomal subunit protein uL13.